Reading from the N-terminus, the 139-residue chain is Putative nickel-responsive regulator (139 aa).

The Ni(2+) site is built by His77, His88, His90, and Cys96.

This sequence belongs to the transcriptional regulatory CopG/NikR family. Ni(2+) serves as cofactor.

Functionally, transcriptional regulator. In Haloarcula marismortui (strain ATCC 43049 / DSM 3752 / JCM 8966 / VKM B-1809) (Halobacterium marismortui), this protein is Putative nickel-responsive regulator.